The chain runs to 483 residues: Phloretin 2'-O-glucosyltransferase (483 aa).

H15 (proton acceptor) is an active-site residue. An an anthocyanidin-binding site is contributed by H15. D118 functions as the Charge relay in the catalytic mechanism. UDP-alpha-D-glucose contacts are provided by T140, A360, Q362, H377, W380, N381, S382, and E385. An an anthocyanidin-binding site is contributed by A400. Residues E401 and Q402 each contribute to the UDP-alpha-D-glucose site.

The protein belongs to the UDP-glycosyltransferase family.

The enzyme catalyses phloretin + UDP-alpha-D-glucose = phlorizin + UDP + H(+). Glycosyltransferase that possesses phloretin 2'-O-glycosyltransferase activity. Converts phloretin to phlorizin (phloretin 2'-O-glucoside), a potent antioxidant. Is specific for phloretin and does not possess glycosyltransferase activity toward naringenin, naringenin chalcone, eriodictyol, eriodictyol chalcone, apigenin, luteolin, kaempferol, quercetin, isoliquiritigenin, butein, caffeic acid, 2-coumaric acid, 3-coumaric acid, 3-hydroxybenzoic acid, 3,4-dihydroxybenzoic acid and 3,4-dihydroxyhydrocinnamic acid. Can glycosylate phloretin in the presence of UDP-glucose, UDP-xylose and UDP-galactose. This is Phloretin 2'-O-glucosyltransferase from Pyrus communis (Pear).